The sequence spans 272 residues: MGKFNLGALRVRQNALAQKSSGKISQTPCWVDIVSEIPPATVLVRNLPQQHALVQQRVKTLPGKSRPQTVIEEREIRRIKTKKASRMFQPMQIRYEEDELRKQFFQDHPWELARPRVVLETNGNDHARYDWSRLQQRGKRLDGESVVQRQLYLLNNVPDITKGEAYDIARREFYQLRLQEDIERRVAQEEARATGAYFGPDMMQVGMELENQEYDRWKIWAEKEAEQASQRLAAFAGATGGAKEESDPAILPELEVAESTSESAQPAEIRTG.

A disordered region spans residues 236–272 (AGATGGAKEESDPAILPELEVAESTSESAQPAEIRTG).

This sequence belongs to the mitochondrion-specific ribosomal protein mS23 family. As to quaternary structure, component of the mitochondrial small ribosomal subunit.

It localises to the mitochondrion. This is Small ribosomal subunit protein mS23 (RSM25) from Coccidioides immitis (strain RS) (Valley fever fungus).